A 156-amino-acid chain; its full sequence is Peptide deformylase (156 aa).

2 residues coordinate Fe cation: Cys90 and His132. Glu133 is an active-site residue. Residue His136 participates in Fe cation binding.

It belongs to the polypeptide deformylase family. The cofactor is Fe(2+).

The catalysed reaction is N-terminal N-formyl-L-methionyl-[peptide] + H2O = N-terminal L-methionyl-[peptide] + formate. Removes the formyl group from the N-terminal Met of newly synthesized proteins. Requires at least a dipeptide for an efficient rate of reaction. N-terminal L-methionine is a prerequisite for activity but the enzyme has broad specificity at other positions. The protein is Peptide deformylase of Natranaerobius thermophilus (strain ATCC BAA-1301 / DSM 18059 / JW/NM-WN-LF).